The sequence spans 336 residues: Cytosolic Fe-S cluster assembly factor NBP35 (336 aa).

The interval 1-20 (MIATQRPFPIPSPVPLAPSS) is disordered. Positions 35, 49, 52, and 58 each coordinate [4Fe-4S] cluster. Residue 88-95 (GKGGVGKS) coordinates ATP. Residues cysteine 261 and cysteine 264 each contribute to the [4Fe-4S] cluster site.

The protein belongs to the Mrp/NBP35 ATP-binding proteins family. NUBP1/NBP35 subfamily. In terms of assembly, heterotetramer of 2 NBP35 and 2 CFD1 chains. [4Fe-4S] cluster is required as a cofactor.

Its subcellular location is the cytoplasm. In terms of biological role, component of the cytosolic iron-sulfur (Fe/S) protein assembly (CIA) machinery. Required for maturation of extramitochondrial Fe-S proteins. The NBP35-CFD1 heterotetramer forms a Fe-S scaffold complex, mediating the de novo assembly of an Fe-S cluster and its transfer to target apoproteins. The polypeptide is Cytosolic Fe-S cluster assembly factor NBP35 (Cryptococcus neoformans var. neoformans serotype D (strain B-3501A) (Filobasidiella neoformans)).